A 622-amino-acid polypeptide reads, in one-letter code: Probable potassium transport system protein Kup (622 aa).

Transmembrane regions (helical) follow at residues 9 to 29 (LPAV…TSPL), 52 to 72 (FLSL…LAFV), 101 to 121 (VLLV…VITP), 137 to 157 (PALT…LFVI), 169 to 189 (FGPV…ISIF), 213 to 233 (VAFF…ALYA), 247 to 267 (WFTV…ALIL), 287 to 309 (FPMV…SGVF), 337 to 357 (IYIP…VVTF), 363 to 383 (LAAA…ILAC), 396 to 416 (VVKI…LANV), and 419 to 439 (FFAG…VMAT).

It belongs to the HAK/KUP transporter (TC 2.A.72) family.

The protein localises to the cell inner membrane. The catalysed reaction is K(+)(in) + H(+)(in) = K(+)(out) + H(+)(out). Functionally, transport of potassium into the cell. Likely operates as a K(+):H(+) symporter. This chain is Probable potassium transport system protein Kup, found in Tolumonas auensis (strain DSM 9187 / NBRC 110442 / TA 4).